A 295-amino-acid polypeptide reads, in one-letter code: 4-hydroxy-tetrahydrodipicolinate synthase (295 aa).

Thr-48 is a pyruvate binding site. Tyr-135 acts as the Proton donor/acceptor in catalysis. Lys-163 functions as the Schiff-base intermediate with substrate in the catalytic mechanism. Val-204 contributes to the pyruvate binding site.

This sequence belongs to the DapA family. As to quaternary structure, homotetramer; dimer of dimers.

The protein localises to the cytoplasm. The enzyme catalyses L-aspartate 4-semialdehyde + pyruvate = (2S,4S)-4-hydroxy-2,3,4,5-tetrahydrodipicolinate + H2O + H(+). The protein operates within amino-acid biosynthesis; L-lysine biosynthesis via DAP pathway; (S)-tetrahydrodipicolinate from L-aspartate: step 3/4. In terms of biological role, catalyzes the condensation of (S)-aspartate-beta-semialdehyde [(S)-ASA] and pyruvate to 4-hydroxy-tetrahydrodipicolinate (HTPA). The polypeptide is 4-hydroxy-tetrahydrodipicolinate synthase (Francisella tularensis subsp. novicida (strain U112)).